A 557-amino-acid polypeptide reads, in one-letter code: Neurofilament light polypeptide (557 aa).

Serine 2 is modified (N-acetylserine). A head region spans residues 2-89 (SSYSYDPYYT…KIVRTQEKAQ (88 aa)). Residues 86 to 396 (EKAQLQDLND…KLLEGEETRL (311 aa)) enclose the IF rod domain. The interval 90-121 (LQDLNDRFANFIERVHELEQRNKVLEAELLLL) is coil 1A. The linker 1 stretch occupies residues 122–134 (RQKHNEPSRLRDL). The interval 135-230 (YEQEVRELRL…KVHEEELAQL (96 aa)) is coil 1B. The tract at residues 231-248 (QSQVQYAQISLEVEVAKP) is linker 12. The interval 249 to 267 (DLSSALRDIRAQYEKLAAK) is coil 2A. The interval 268–276 (NMQSAEDWF) is linker 2. A coil 2B region spans residues 277–392 (KSRFTVLTQS…AAYRKLLEGE (116 aa)). The interval 393–437 (ETRLSFSGVGAITSGYTQSAPVFGRSAYSLQSSSYMTSRAFPTYY) is tail, subdomain A. Residues 393-557 (ETRLSFSGVG…KKKKKKKKKK (165 aa)) form a tail region. Residues 438 to 557 (SSHVQEEQLD…KKKKKKKKKK (120 aa)) are tail, subdomain B (acidic). Residues 452 to 557 (IESSRAEEAK…KKKKKKKKKK (106 aa)) are disordered. The span at 453-464 (ESSRAEEAKAEA) shows a compositional bias: basic and acidic residues. Positions 465–538 (PEEEEEEAGE…GEGEEEEEGK (74 aa)) are enriched in acidic residues. Over residues 539-548 (GEEPAEEESK) the composition is skewed to basic and acidic residues.

This sequence belongs to the intermediate filament family. In terms of assembly, forms homodimers (in vitro).

The protein localises to the cell projection. Its subcellular location is the axon. It is found in the cytoplasm. The protein resides in the cytoskeleton. Neurofilaments usually contain three intermediate filament proteins: NEFL, NEFM, and NEFH which are involved in the maintenance of neuronal caliber. May additionally cooperate with other neuronal intermediate filament proteins to form neuronal filamentous networks. This chain is Neurofilament light polypeptide (nefl), found in Xenopus tropicalis (Western clawed frog).